The chain runs to 925 residues: Eukaryotic translation initiation factor 3 subunit A (925 aa).

Positions 108–127 are disordered; the sequence is QAQTDAKEESNKDQAEEDLE. Residues 112 to 121 are compositionally biased toward basic and acidic residues; the sequence is DAKEESNKDQ. In terms of domain architecture, PCI spans 324-498; that stretch reads FKFYSSQFVL…DTVSFAQDPF (175 aa). 2 disordered regions span residues 509–544 and 839–925; these read PESS…FTRN and KEAL…AGRG. Coiled-coil stretches lie at residues 534 to 666 and 785 to 885; these read EEQN…MKKL and SVIA…SSRS. The segment covering 839–880 has biased composition (basic and acidic residues); the sequence is KEALAKEEELAKRRAERERINKERDEIARKQREIEELLEKKN. The segment covering 916 to 925 has biased composition (basic residues); sequence RLKRMNAGRG.

Belongs to the eIF-3 subunit A family. In terms of assembly, component of the eukaryotic translation initiation factor 3 (eIF-3) complex.

Its subcellular location is the cytoplasm. Its function is as follows. RNA-binding component of the eukaryotic translation initiation factor 3 (eIF-3) complex, which is involved in protein synthesis of a specialized repertoire of mRNAs and, together with other initiation factors, stimulates binding of mRNA and methionyl-tRNAi to the 40S ribosome. The eIF-3 complex specifically targets and initiates translation of a subset of mRNAs involved in cell proliferation. The polypeptide is Eukaryotic translation initiation factor 3 subunit A (Kluyveromyces lactis (strain ATCC 8585 / CBS 2359 / DSM 70799 / NBRC 1267 / NRRL Y-1140 / WM37) (Yeast)).